The chain runs to 369 residues: uncharacterized protein (369 aa).

It belongs to the myo-inositol 1-phosphate synthase family.

This is an uncharacterized protein from Mycobacterium leprae (strain TN).